The sequence spans 65 residues: Weak neurotoxin 7 (65 aa).

Cystine bridges form between C3-C24, C6-C11, C17-C42, C46-C57, and C58-C63.

Belongs to the three-finger toxin family. Ancestral subfamily. Orphan group II sub-subfamily. In terms of tissue distribution, expressed by the venom gland.

The protein localises to the secreted. Functionally, binds with low affinity to muscular (alpha-1-beta-1-delta-epsilon/CHRNA1-CHRNB1-CHRND-CHRNE) and very low affinity to neuronal (alpha-7/CHRNA7) nicotinic acetylcholine receptor (nAChR). This Naja naja (Indian cobra) protein is Weak neurotoxin 7.